The primary structure comprises 225 residues: DNA-binding response regulator MtrA (225 aa).

Residues 4 to 117 (RILVVDDDAS…ELVARVRARL (114 aa)) enclose the Response regulatory domain. Aspartate 53 bears the 4-aspartylphosphate mark. A DNA-binding region (ompR/PhoB-type) is located at residues 125-224 (AEMLSIADVD…VRGVGYKAGP (100 aa)).

Phosphorylated by MtrB.

Its function is as follows. Member of the two-component regulatory system MtrA/MtrB. The sequence is that of DNA-binding response regulator MtrA (mtrA) from Mycobacterium leprae (strain TN).